We begin with the raw amino-acid sequence, 89 residues long: Neuropeptide S (89 aa).

The signal sequence occupies residues 1 to 23 (MISSVKLNLILVLSLSTMHVFWC). Residues 24–67 (YPVPSSKVSGKSDYFLILLNSCPTRLDRSKELAFLKPILEKMFV) constitute a propeptide that is removed on maturation.

It localises to the secreted. Modulates arousal and anxiety. May play an important anorexigenic role. Binds to its receptor NPSR1 with nanomolar affinity to increase intracellular calcium concentrations. The chain is Neuropeptide S (NPS) from Homo sapiens (Human).